The primary structure comprises 292 residues: 4-hydroxy-tetrahydrodipicolinate synthase (292 aa).

Residue T45 participates in pyruvate binding. Y133 acts as the Proton donor/acceptor in catalysis. K161 functions as the Schiff-base intermediate with substrate in the catalytic mechanism. Residue I203 participates in pyruvate binding.

The protein belongs to the DapA family. In terms of assembly, homotetramer; dimer of dimers.

It is found in the cytoplasm. The enzyme catalyses L-aspartate 4-semialdehyde + pyruvate = (2S,4S)-4-hydroxy-2,3,4,5-tetrahydrodipicolinate + H2O + H(+). It functions in the pathway amino-acid biosynthesis; L-lysine biosynthesis via DAP pathway; (S)-tetrahydrodipicolinate from L-aspartate: step 3/4. Catalyzes the condensation of (S)-aspartate-beta-semialdehyde [(S)-ASA] and pyruvate to 4-hydroxy-tetrahydrodipicolinate (HTPA). The chain is 4-hydroxy-tetrahydrodipicolinate synthase from Shigella boydii serotype 18 (strain CDC 3083-94 / BS512).